The chain runs to 91 residues: Small ribosomal subunit protein bS16c (91 aa).

The protein belongs to the bacterial ribosomal protein bS16 family.

The protein localises to the plastid. It is found in the chloroplast. In Pelargonium hortorum (Common geranium), this protein is Small ribosomal subunit protein bS16c.